The sequence spans 715 residues: Fatty acid oxidation complex subunit alpha (715 aa).

Residues 1–190 (MDMTSAFTLN…RVGLVDEVVP (190 aa)) are enoyl-CoA hydratase. Residues 306–715 (GPLASVGVLG…WNSGETDLKE (410 aa)) are 3-hydroxyacyl-CoA dehydrogenase.

In the N-terminal section; belongs to the enoyl-CoA hydratase/isomerase family. This sequence in the central section; belongs to the 3-hydroxyacyl-CoA dehydrogenase family. Heterotetramer of two alpha chains (FadJ) and two beta chains (FadI).

The protein localises to the cytoplasm. It catalyses the reaction a (3S)-3-hydroxyacyl-CoA = a (2E)-enoyl-CoA + H2O. The catalysed reaction is a 4-saturated-(3S)-3-hydroxyacyl-CoA = a (3E)-enoyl-CoA + H2O. It carries out the reaction a (3S)-3-hydroxyacyl-CoA + NAD(+) = a 3-oxoacyl-CoA + NADH + H(+). The enzyme catalyses (3S)-3-hydroxybutanoyl-CoA = (3R)-3-hydroxybutanoyl-CoA. It participates in lipid metabolism; fatty acid beta-oxidation. Catalyzes the formation of a hydroxyacyl-CoA by addition of water on enoyl-CoA. Also exhibits 3-hydroxyacyl-CoA epimerase and 3-hydroxyacyl-CoA dehydrogenase activities. The polypeptide is Fatty acid oxidation complex subunit alpha (Citrobacter koseri (strain ATCC BAA-895 / CDC 4225-83 / SGSC4696)).